The following is a 628-amino-acid chain: Translation factor GUF1, mitochondrial (628 aa).

Residues 27–209 (LPSRNFSIIA…AIISRIPPPS (183 aa)) form the tr-type G domain. Residues 36-43 (AHIDHGKS), 102-106 (DTPGH), and 156-159 (NKID) contribute to the GTP site.

It belongs to the TRAFAC class translation factor GTPase superfamily. Classic translation factor GTPase family. LepA subfamily.

The protein resides in the mitochondrion inner membrane. It carries out the reaction GTP + H2O = GDP + phosphate + H(+). In terms of biological role, promotes mitochondrial protein synthesis. May act as a fidelity factor of the translation reaction, by catalyzing a one-codon backward translocation of tRNAs on improperly translocated ribosomes. Binds to mitochondrial ribosomes in a GTP-dependent manner. In Laccaria bicolor (strain S238N-H82 / ATCC MYA-4686) (Bicoloured deceiver), this protein is Translation factor GUF1, mitochondrial.